A 309-amino-acid chain; its full sequence is Ribosomal RNA small subunit methyltransferase H (309 aa).

S-adenosyl-L-methionine is bound by residues 44–46 (GGH), aspartate 62, phenylalanine 102, aspartate 118, and glutamine 125. The disordered stretch occupies residues 289-309 (LEQQRNSRARSAKLRVAARSS).

The protein belongs to the methyltransferase superfamily. RsmH family.

It is found in the cytoplasm. The enzyme catalyses cytidine(1402) in 16S rRNA + S-adenosyl-L-methionine = N(4)-methylcytidine(1402) in 16S rRNA + S-adenosyl-L-homocysteine + H(+). Its function is as follows. Specifically methylates the N4 position of cytidine in position 1402 (C1402) of 16S rRNA. The protein is Ribosomal RNA small subunit methyltransferase H of Synechococcus sp. (strain JA-3-3Ab) (Cyanobacteria bacterium Yellowstone A-Prime).